The following is a 174-amino-acid chain: Phytochrome-interacting ankyrin-repeat protein 2 (174 aa).

Residues 1–13 (MLQEPSAAFSLRR) are compositionally biased toward low complexity. Positions 1–29 (MLQEPSAAFSLRRNSFRRRSPRSNVDDRG) are disordered. S15 carries the phosphoserine modification. ANK repeat units lie at residues 28–57 (RGWNPLHIKARKGDLKSVKQLLDQGMDVNA), 65–94 (KGVSALHLAAEGGHIEVMDLLLERGANIDA), and 100–129 (CGWTPLHAAAKERKREAVKFLVENGAFLAD).

Interacts with phytochrome A (PHYA), both in Pr and Pfr forms. Binds to PIF3, a repressor of photomorphogenesis in response to phytochrome-mediated light signaling; this interaction may trigger the repression of PHYA-mediated PIF3 phosphorylation. Interacts with SIGE/SIG5 in mitochondrion. Interacts with RPS9M (via C terminus). Post-translationally, phosphorylated by PHYA. In terms of tissue distribution, mostly expressed in flowers, cotyledons, leaves and siliques, and, to a lower extent, in roots and stems. Also detected at low levels in seedlings grown in continuous dark or light conditions. Expressed in male and female gametophytes.

The protein resides in the cytoplasm. It localises to the nucleus. Its subcellular location is the mitochondrion. Promotes anthocyanin accumulation through interaction with PHYA, especially in response to far-red light, high light and sucrose treatment, probably by triggering A3G2XYLT/UF3GT expression. Required for gametophytes development as well as male-female gamete recognition during fertilization, possibly by regulating mitochondrial gene expression. Represses PHYA-mediated PIF3 phosphorylation. In Arabidopsis thaliana (Mouse-ear cress), this protein is Phytochrome-interacting ankyrin-repeat protein 2.